Here is a 329-residue protein sequence, read N- to C-terminus: Probable ABC transporter permease protein MG188 homolog (329 aa).

The next 6 membrane-spanning stretches (helical) occupy residues 30–50, 96–116, 128–148, 176–196, 234–254, and 283–303; these read FLLF…PFFL, IISL…IVFV, VFFL…IYIL, ALWG…VLVI, LIFL…ISLF, and NFAG…GLVL. Residues 88-303 enclose the ABC transmembrane type-1 domain; it reads LRNSFLYSII…ILGVCYGLVL (216 aa).

This sequence belongs to the binding-protein-dependent transport system permease family. MalFG subfamily.

It is found in the cell membrane. Probably part of a binding-protein-dependent transport system. Probably responsible for the translocation of the substrate across the membrane. The polypeptide is Probable ABC transporter permease protein MG188 homolog (Mycoplasma pneumoniae (strain ATCC 29342 / M129 / Subtype 1) (Mycoplasmoides pneumoniae)).